A 194-amino-acid polypeptide reads, in one-letter code: Thymidine kinase (194 aa).

Residues 15 to 22 and 88 to 91 each bind ATP; these read GSMFSGKS and DEVQ. Catalysis depends on Glu89, which acts as the Proton acceptor. Zn(2+) contacts are provided by Cys145, Cys148, Cys183, and His186.

Belongs to the thymidine kinase family. As to quaternary structure, homotetramer.

The protein resides in the cytoplasm. The catalysed reaction is thymidine + ATP = dTMP + ADP + H(+). This chain is Thymidine kinase, found in Bacillus velezensis (strain DSM 23117 / BGSC 10A6 / LMG 26770 / FZB42) (Bacillus amyloliquefaciens subsp. plantarum).